A 126-amino-acid chain; its full sequence is 3-aminoacrylate deaminase RutC (126 aa).

The protein belongs to the RutC family.

The enzyme catalyses (Z)-3-aminoacrylate + H2O + H(+) = 3-oxopropanoate + NH4(+). In terms of biological role, involved in pyrimidine catabolism. Catalyzes the deamination of 3-aminoacrylate to malonic semialdehyde, a reaction that can also occur spontaneously. RutC may facilitate the reaction and modulate the metabolic fitness, rather than catalyzing essential functions. This Acinetobacter baylyi (strain ATCC 33305 / BD413 / ADP1) protein is 3-aminoacrylate deaminase RutC.